The primary structure comprises 110 residues: MSGWYELSKSSNDQFKFVLKAGNGEVILTSELYTGKSGAMNGIESVQTNSPIEARYAKEVAKNDKPYFNLKAANHQIIGTSQMYSSTAARDNGIKSVMENGKTTTIKDLT.

2 repeat units span residues 10–58 (SSND…RYAK) and 61–109 (AKND…IKDL).

The protein belongs to the UPF0339 family. Duplicated subfamily.

This Shewanella oneidensis (strain ATCC 700550 / JCM 31522 / CIP 106686 / LMG 19005 / NCIMB 14063 / MR-1) protein is UPF0339 protein SO_3888.